A 341-amino-acid chain; its full sequence is Eukaryotic translation initiation factor 3 subunit I (341 aa).

WD repeat units follow at residues 8–49 (GHER…GTYH), 50–91 (GHQG…HTWE), 145–184 (CDESKATVAGWSYLAKYIIAGHEDGSVSQYDAKNGDQLHS), 189–228 (DMGSEIRDLQWSQDRTYFITASKDKTAKLVTARDLEVLKT), and 286–325 (GHFGPLNYVAAEPNGKGYASGGEDGYVRVHQFDKGYFDFM).

This sequence belongs to the eIF-3 subunit I family. In terms of assembly, component of the eukaryotic translation initiation factor 3 (eIF-3) complex.

The protein resides in the cytoplasm. In terms of biological role, component of the eukaryotic translation initiation factor 3 (eIF-3) complex, which is involved in protein synthesis of a specialized repertoire of mRNAs and, together with other initiation factors, stimulates binding of mRNA and methionyl-tRNAi to the 40S ribosome. The eIF-3 complex specifically targets and initiates translation of a subset of mRNAs involved in cell proliferation. The protein is Eukaryotic translation initiation factor 3 subunit I of Pyricularia oryzae (strain 70-15 / ATCC MYA-4617 / FGSC 8958) (Rice blast fungus).